A 209-amino-acid chain; its full sequence is Large ribosomal subunit protein uL4 (209 aa).

The tract at residues Gly46 to Arg71 is disordered. Over residues Ser59–Arg71 the composition is skewed to basic residues.

The protein belongs to the universal ribosomal protein uL4 family. In terms of assembly, part of the 50S ribosomal subunit.

In terms of biological role, one of the primary rRNA binding proteins, this protein initially binds near the 5'-end of the 23S rRNA. It is important during the early stages of 50S assembly. It makes multiple contacts with different domains of the 23S rRNA in the assembled 50S subunit and ribosome. Forms part of the polypeptide exit tunnel. This Borreliella afzelii (strain PKo) (Borrelia afzelii) protein is Large ribosomal subunit protein uL4.